Reading from the N-terminus, the 122-residue chain is Large ribosomal subunit protein uL14 (122 aa).

Belongs to the universal ribosomal protein uL14 family. Part of the 50S ribosomal subunit. Forms a cluster with proteins L3 and L19. In the 70S ribosome, L14 and L19 interact and together make contacts with the 16S rRNA in bridges B5 and B8.

Functionally, binds to 23S rRNA. Forms part of two intersubunit bridges in the 70S ribosome. This is Large ribosomal subunit protein uL14 from Gluconacetobacter diazotrophicus (strain ATCC 49037 / DSM 5601 / CCUG 37298 / CIP 103539 / LMG 7603 / PAl5).